The following is a 112-amino-acid chain: Thioredoxin-like protein YdfQ (112 aa).

In terms of domain architecture, Thioredoxin spans 1–107 (MKEMTGLHSL…LEQKLKRVYR (107 aa)). A disulfide bridge links Cys-32 with Cys-35.

This chain is Thioredoxin-like protein YdfQ (ydfQ), found in Bacillus subtilis (strain 168).